We begin with the raw amino-acid sequence, 633 residues long: RpoH suppressor (633 aa).

A PNPLA domain is found at 11–410; it reads LVMKGGITSG…SSNFPIHLFD (400 aa). The next 3 helical transmembrane spans lie at 38–58, 133–153, and 159–179; these read NIGGTSAGAIAAAACAAAAVG, IAPVETLLLLAALAGLAYAVG, and IAAALPAAICAYLGGVVFAVL. The short motif at 41 to 45 is the GXSXG element; sequence GTSAG. Catalysis depends on Ser-43, which acts as the Nucleophile. The disordered stretch occupies residues 342 to 380; that stretch reads ARRESLPGSDGENEAEDTTSDEDEQKTVLDSTEALTTGG. The span at 352–365 shows a compositional bias: acidic residues; the sequence is GENEAEDTTSDEDE. Asp-397 acts as the Proton acceptor in catalysis. The DGA/G signature appears at 397-399; the sequence is DGG. Residues 605–624 are disordered; that stretch reads EGEKWSGEGPDLTKTAPRPL.

It localises to the cell membrane. Functionally, this protein is non-essential for R.meliloti growth, but induces a heat-shock response in temperature-sensitive E.coli K165 by elevating levels of sigma 32 (mechanism unknown). The protein is RpoH suppressor (suhR) of Rhizobium meliloti (strain 1021) (Ensifer meliloti).